The primary structure comprises 456 residues: Phosphatidylinositol N-acetylglucosaminyltransferase gpi3 subunit (456 aa).

This sequence belongs to the glycosyltransferase group 1 family. Glycosyltransferase 4 subfamily. In terms of assembly, component of a Phosphatidylinositol N-acetylglucosaminyltransferase complex.

It carries out the reaction a 1,2-diacyl-sn-glycero-3-phospho-(1D-myo-inositol) + UDP-N-acetyl-alpha-D-glucosamine = a 6-(N-acetyl-alpha-D-glucosaminyl)-1-(1,2-diacyl-sn-glycero-3-phospho)-1D-myo-inositol + UDP + H(+). It participates in glycolipid biosynthesis; glycosylphosphatidylinositol-anchor biosynthesis. In terms of biological role, catalytic subunit in the complex catalyzing the transfer of N-acetylglucosamine from UDP-N-acetylglucosamine to phosphatidylinositol, the first step of GPI biosynthesis. The protein is Phosphatidylinositol N-acetylglucosaminyltransferase gpi3 subunit (gpi3) of Schizosaccharomyces pombe (strain 972 / ATCC 24843) (Fission yeast).